We begin with the raw amino-acid sequence, 460 residues long: UDP-N-acetylmuramoylalanine--D-glutamate ligase (460 aa).

120–126 (GSNGKTT) is a binding site for ATP.

Belongs to the MurCDEF family.

It is found in the cytoplasm. The enzyme catalyses UDP-N-acetyl-alpha-D-muramoyl-L-alanine + D-glutamate + ATP = UDP-N-acetyl-alpha-D-muramoyl-L-alanyl-D-glutamate + ADP + phosphate + H(+). It participates in cell wall biogenesis; peptidoglycan biosynthesis. In terms of biological role, cell wall formation. Catalyzes the addition of glutamate to the nucleotide precursor UDP-N-acetylmuramoyl-L-alanine (UMA). The sequence is that of UDP-N-acetylmuramoylalanine--D-glutamate ligase from Lactobacillus delbrueckii subsp. bulgaricus (strain ATCC 11842 / DSM 20081 / BCRC 10696 / JCM 1002 / NBRC 13953 / NCIMB 11778 / NCTC 12712 / WDCM 00102 / Lb 14).